A 463-amino-acid chain; its full sequence is tRNA modification GTPase MnmE (463 aa).

Residues Arg-29, Glu-91, and Arg-130 each contribute to the (6S)-5-formyl-5,6,7,8-tetrahydrofolate site. The TrmE-type G domain maps to 225 to 384 (GLKVAIVGRP…LETAILEIVQ (160 aa)). Asn-235 contributes to the K(+) binding site. GTP-binding positions include 235–240 (NVGKSS), 254–260 (TDLPGTT), and 279–282 (DTAG). Ser-239 lines the Mg(2+) pocket. K(+)-binding residues include Thr-254, Leu-256, and Thr-259. Thr-260 lines the Mg(2+) pocket. Lys-463 contributes to the (6S)-5-formyl-5,6,7,8-tetrahydrofolate binding site.

Belongs to the TRAFAC class TrmE-Era-EngA-EngB-Septin-like GTPase superfamily. TrmE GTPase family. Homodimer. Heterotetramer of two MnmE and two MnmG subunits. The cofactor is K(+).

It is found in the cytoplasm. Exhibits a very high intrinsic GTPase hydrolysis rate. Involved in the addition of a carboxymethylaminomethyl (cmnm) group at the wobble position (U34) of certain tRNAs, forming tRNA-cmnm(5)s(2)U34. The chain is tRNA modification GTPase MnmE from Trichormus variabilis (strain ATCC 29413 / PCC 7937) (Anabaena variabilis).